The following is a 156-amino-acid chain: 6,7-dimethyl-8-ribityllumazine synthase (156 aa).

Residues phenylalanine 22, 57-59 (AVE), and 81-83 (SVI) each bind 5-amino-6-(D-ribitylamino)uracil. Residue 86-87 (GT) participates in (2S)-2-hydroxy-3-oxobutyl phosphate binding. Catalysis depends on histidine 89, which acts as the Proton donor. Phenylalanine 114 is a 5-amino-6-(D-ribitylamino)uracil binding site. A (2S)-2-hydroxy-3-oxobutyl phosphate-binding site is contributed by arginine 128.

It belongs to the DMRL synthase family. Forms an icosahedral capsid composed of 60 subunits, arranged as a dodecamer of pentamers.

The enzyme catalyses (2S)-2-hydroxy-3-oxobutyl phosphate + 5-amino-6-(D-ribitylamino)uracil = 6,7-dimethyl-8-(1-D-ribityl)lumazine + phosphate + 2 H2O + H(+). Its pathway is cofactor biosynthesis; riboflavin biosynthesis; riboflavin from 2-hydroxy-3-oxobutyl phosphate and 5-amino-6-(D-ribitylamino)uracil: step 1/2. In terms of biological role, catalyzes the formation of 6,7-dimethyl-8-ribityllumazine by condensation of 5-amino-6-(D-ribitylamino)uracil with 3,4-dihydroxy-2-butanone 4-phosphate. This is the penultimate step in the biosynthesis of riboflavin. The sequence is that of 6,7-dimethyl-8-ribityllumazine synthase from Aliivibrio fischeri (strain ATCC 700601 / ES114) (Vibrio fischeri).